The primary structure comprises 45 residues: Photosystem II reaction center protein K (45 aa).

A propeptide spanning residues 1–8 (MEAVFLLA) is cleaved from the precursor. The chain crosses the membrane as a helical span at residues 24-44 (LPVIPVFFLALAFVWQAAVGF).

This sequence belongs to the PsbK family. PSII is composed of 1 copy each of membrane proteins PsbA, PsbB, PsbC, PsbD, PsbE, PsbF, PsbH, PsbI, PsbJ, PsbK, PsbL, PsbM, PsbT, PsbX, PsbY, PsbZ, Psb30/Ycf12, peripheral proteins PsbO, CyanoQ (PsbQ), PsbU, PsbV and a large number of cofactors. It forms dimeric complexes.

The protein resides in the cellular thylakoid membrane. Its function is as follows. One of the components of the core complex of photosystem II (PSII). PSII is a light-driven water:plastoquinone oxidoreductase that uses light energy to abstract electrons from H(2)O, generating O(2) and a proton gradient subsequently used for ATP formation. It consists of a core antenna complex that captures photons, and an electron transfer chain that converts photonic excitation into a charge separation. This is Photosystem II reaction center protein K from Crocosphaera subtropica (strain ATCC 51142 / BH68) (Cyanothece sp. (strain ATCC 51142)).